We begin with the raw amino-acid sequence, 244 residues long: Phosphoadenosine 5'-phosphosulfate reductase (244 aa).

C239 acts as the Nucleophile; cysteine thiosulfonate intermediate in catalysis.

The protein belongs to the PAPS reductase family. CysH subfamily.

It is found in the cytoplasm. It catalyses the reaction [thioredoxin]-disulfide + sulfite + adenosine 3',5'-bisphosphate + 2 H(+) = [thioredoxin]-dithiol + 3'-phosphoadenylyl sulfate. The protein operates within sulfur metabolism; hydrogen sulfide biosynthesis; sulfite from sulfate: step 3/3. In terms of biological role, catalyzes the formation of sulfite from phosphoadenosine 5'-phosphosulfate (PAPS) using thioredoxin as an electron donor. The protein is Phosphoadenosine 5'-phosphosulfate reductase of Salmonella agona (strain SL483).